Consider the following 332-residue polypeptide: DNA double-strand break repair nuclease NurA (332 aa).

Mn(2+)-binding residues include D57 and D132.

This sequence belongs to the NurA family. Mn(2+) is required as a cofactor.

Functionally, involved in DNA double-strand break (DSB) repair. Probably acts with HerA to stimulate resection of the 5' strand and produce the long 3' single-strand that is required for RadA loading. Exhibits both single-stranded endonuclease activity and 5'-3' exonuclease activity on single-stranded and double-stranded DNA. This chain is DNA double-strand break repair nuclease NurA, found in Sulfolobus acidocaldarius (strain ATCC 33909 / DSM 639 / JCM 8929 / NBRC 15157 / NCIMB 11770).